Here is a 361-residue protein sequence, read N- to C-terminus: Probable G-protein coupled receptor 25 (361 aa).

The Extracellular portion of the chain corresponds to 1-39 (MAPTEPWSPSPGSAPWDYSGLDGLEELELCPAGDLPYGY). Residues 40 to 60 (VYIPALYLAAFAVGLLGNAFV) form a helical membrane-spanning segment. Residues 61-75 (VWLLAGRRGPRRLVD) lie on the Cytoplasmic side of the membrane. A helical transmembrane segment spans residues 76–96 (TFVLHLAAADLGFVLTLPLWA). Over 97–126 (AAAALGGRWPFGDGLCKLSSFALAGTRCAG) the chain is Extracellular. Residues 127–147 (ALLLAGMSVDRYLAVVKLLEA) form a helical membrane-spanning segment. At 148-155 (RPLRTPRC) the chain is on the cytoplasmic side. The helical transmembrane segment at 156–176 (ALASCCGVWAVALLAGLPSLV) threads the bilayer. The Extracellular segment spans residues 177–200 (YRGLQPLPGGQDSQCGEEPSHAFQ). The chain crosses the membrane as a helical span at residues 201–220 (GLSLLLLLLTFVLPLVVTLF). The Cytoplasmic portion of the chain corresponds to 221-242 (CYCRISRRLRRPPHVGRARRNS). The helical transmembrane segment at 243–263 (LRIIFAIESTFVGSWLPFSAL) threads the bilayer. The Extracellular portion of the chain corresponds to 264 to 289 (RAVFHLARLGALPLPCPLLLALRWGL). Residues 290–310 (TIATCLAFVNSCANPLIYLLL) traverse the membrane as a helical segment. The Cytoplasmic portion of the chain corresponds to 311 to 361 (DRSFRARALDGACGRTGRLARRISSASSLSRDDSSVFRCRAQAANTASASW).

It belongs to the G-protein coupled receptor 1 family.

It localises to the cell membrane. Its function is as follows. Orphan receptor. The protein is Probable G-protein coupled receptor 25 (GPR25) of Homo sapiens (Human).